The sequence spans 282 residues: Probable endonuclease 4 (282 aa).

9 residues coordinate Zn(2+): His-69, His-109, Glu-145, Asp-179, His-182, His-216, Asp-229, His-231, and Glu-261.

Belongs to the AP endonuclease 2 family. Zn(2+) is required as a cofactor.

It catalyses the reaction Endonucleolytic cleavage to 5'-phosphooligonucleotide end-products.. Its function is as follows. Endonuclease IV plays a role in DNA repair. It cleaves phosphodiester bonds at apurinic or apyrimidinic (AP) sites, generating a 3'-hydroxyl group and a 5'-terminal sugar phosphate. This Chlorobium chlorochromatii (strain CaD3) protein is Probable endonuclease 4.